Reading from the N-terminus, the 41-residue chain is Virescein (41 aa).

A Histidine amide modification is found at H41.

As to quaternary structure, monomer. Hemolymph.

The protein resides in the secreted. Has antibacterial activity against Gram-positive and Gram-negative bacteria. The sequence is that of Virescein from Heliothis virescens (Tobacco budworm moth).